The sequence spans 1897 residues: 1,3-beta-glucan synthase component FKS1 (1897 aa).

The disordered stretch occupies residues 1–106 (MSGYPAGHYE…SETFSDFTMR (106 aa)). Residues 8–29 (HYEDGYGHQEHGGDAYYQDEHG) show a composition bias toward basic and acidic residues. Residues 74-83 (GDQYYDQGNG) are compositionally biased toward low complexity. Helical transmembrane passes span 487 to 507 (IWVI…PTLY), 525 to 545 (WSAV…ATLC), 564 to 584 (LMFL…VFGF), 591 to 611 (TICL…FFFF), 655 to 675 (LWIC…TLSL), 707 to 727 (ILLG…SYLW), 728 to 748 (YVIC…VSIW), 1329 to 1349 (NMFI…LGAL), 1386 to 1406 (CVVS…VQEL), 1473 to 1493 (FAGP…FATS), 1497 to 1517 (TPAL…PFLF), 1588 to 1608 (IFFS…VPYL), 1630 to 1650 (IAIV…MFFG), 1666 to 1686 (FGAV…LVIF), 1701 to 1721 (VLGM…IISL), 1766 to 1786 (FSAD…ALCI), and 1826 to 1846 (FAIL…APLV).

It belongs to the glycosyltransferase 48 family. Component of the 1,3-beta-glucan synthase (GS) complex composed of a catalytic subunit fksA and a regulatory subunit.

The protein resides in the mitochondrion. Its subcellular location is the cell membrane. It catalyses the reaction [(1-&gt;3)-beta-D-glucosyl](n) + UDP-alpha-D-glucose = [(1-&gt;3)-beta-D-glucosyl](n+1) + UDP + H(+). Catalytic subunit of the 1,3-beta-glucan synthase. Synthesizes 1,3-beta-glucan, a major structural component of the fungal cell wall. Involved in cell wall synthesis, maintenance and remodeling. The chain is 1,3-beta-glucan synthase component FKS1 from Aspergillus niger (strain ATCC MYA-4892 / CBS 513.88 / FGSC A1513).